Here is a 145-residue protein sequence, read N- to C-terminus: Ribonuclease H (145 aa).

The RNase H type-1 domain occupies 2–143; that stretch reads SKKEVIIYTD…ADSLARKAII (142 aa). Positions 11, 49, 71, and 135 each coordinate Mg(2+).

The protein belongs to the RNase H family. In terms of assembly, monomer. Requires Mg(2+) as cofactor.

It is found in the cytoplasm. The catalysed reaction is Endonucleolytic cleavage to 5'-phosphomonoester.. Functionally, endonuclease that specifically degrades the RNA of RNA-DNA hybrids. The sequence is that of Ribonuclease H from Wolbachia pipientis wMel.